Here is a 431-residue protein sequence, read N- to C-terminus: MVRLEKNDPLMLARQLPIKSVALILAGGRGTRLKDLTIKRAKPAVHFGGKFRIIDFALSNCINSGIRRIGVITQYQSHTLVQHIQRGWSFFSEEMNEFVDLLPAQQRVHGENWYRGTADAVTQNLDIISRYKAEYVVILAGDHIYKQDYSRMLIDHVEKGARCTVACMPVPIEEASAFGVMAVDENEKIIEFVEKPANPPAMPTDPTKSLASMGIYVFDAAYLYELLEEDDRNENSSHDFGKDIIPKITEAGMAYAHPFPLSCVQSDPNAEPYWRDVGTLEAYWKANLDLASVTPELDMYDQNWPIRTHMESLPPAKFVQDRSGSHGMTLNSLVSGGCIISGSVVVQSVLFPRVRVNSFCNIDSAVLLPDVWVGRSCRLRRCVIDRACVIPEGMVIGENAEEDARRFYRSEEGIVLVTRDMLRKLGHKQER.

Lysine 39 contacts beta-D-fructose 1,6-bisphosphate. AMP is bound by residues arginine 40, histidine 46, and arginine 52. Tyrosine 114 serves as a coordination point for alpha-D-glucose 1-phosphate. Residue arginine 130 coordinates AMP. Residues glycine 179, glutamate 194–lysine 195, and serine 212 contribute to the alpha-D-glucose 1-phosphate site. AMP is bound at residue arginine 386. Glutamine 429–arginine 431 contacts beta-D-fructose 1,6-bisphosphate.

Belongs to the bacterial/plant glucose-1-phosphate adenylyltransferase family. As to quaternary structure, homotetramer.

It catalyses the reaction alpha-D-glucose 1-phosphate + ATP + H(+) = ADP-alpha-D-glucose + diphosphate. The protein operates within glycan biosynthesis; glycogen biosynthesis. With respect to regulation, allosterically activated by fructose-1,6-bisphosphate (F16BP) and inhibited by AMP. In terms of biological role, involved in the biosynthesis of ADP-glucose, a building block required for the elongation reactions to produce glycogen. Catalyzes the reaction between ATP and alpha-D-glucose 1-phosphate (G1P) to produce pyrophosphate and ADP-Glc. The protein is Glucose-1-phosphate adenylyltransferase of Klebsiella pneumoniae subsp. pneumoniae (strain ATCC 700721 / MGH 78578).